The following is a 501-amino-acid chain: CaM kinase-like vesicle-associated protein (501 aa).

A Protein kinase domain is found at 24 to 286; sequence YDLGQVIKTE…AEEAISHEWI (263 aa). Positions 327–501 are disordered; the sequence is RAPEQSSTAA…AQESQREEAS (175 aa). A compositionally biased stretch (low complexity) spans 331–365; that stretch reads QSSTAAAQSASATDTATPGAAGGATAAAASGATSA. Polar residues predominate over residues 387–428; sequence TPATDGSATPATDGSVTPATDGSITPATDGSVTPATDRSATP. Thr435 carries the phosphothreonine modification. The span at 438 to 451 shows a compositional bias: polar residues; the sequence is TEESTVPTTQSSAM. Thr459 carries the phosphothreonine modification.

Belongs to the protein kinase superfamily. CAMK Ser/Thr protein kinase family. In terms of assembly, interacts with calmodulin, in the presence of calcium. Ca(2+) is required as a cofactor.

It is found in the cell membrane. It localises to the cytoplasmic vesicle membrane. In terms of biological role, does not appear to have detectable kinase activity. This Homo sapiens (Human) protein is CaM kinase-like vesicle-associated protein (CAMKV).